Reading from the N-terminus, the 488-residue chain is Rhamnulokinase (488 aa).

ATP is bound at residue 11 to 15 (ASSGR). Substrate is bound by residues Ala-79 and 234–236 (HDT). Asp-235 (proton acceptor) is an active-site residue. Thr-257 lines the ATP pocket. Asn-294 contributes to the substrate binding site. ATP-binding residues include Gln-302 and Gly-401.

Belongs to the rhamnulokinase family. It depends on Mg(2+) as a cofactor.

The catalysed reaction is L-rhamnulose + ATP = L-rhamnulose 1-phosphate + ADP + H(+). It participates in carbohydrate degradation; L-rhamnose degradation; glycerone phosphate from L-rhamnose: step 2/3. Its function is as follows. Involved in the catabolism of L-rhamnose (6-deoxy-L-mannose). Catalyzes the transfer of the gamma-phosphate group from ATP to the 1-hydroxyl group of L-rhamnulose to yield L-rhamnulose 1-phosphate. In Lactiplantibacillus plantarum (strain ATCC BAA-793 / NCIMB 8826 / WCFS1) (Lactobacillus plantarum), this protein is Rhamnulokinase.